The chain runs to 75 residues: MIDTLKGWAEYLVEWAAKDPYGFLITVLLALTPLFLASAVLSWKMAKMIEAKERDQKKKQKRQENIAKAKRTKKD.

A helical transmembrane segment spans residues 21 to 41 (YGFLITVLLALTPLFLASAVL). A coiled-coil region spans residues 49 to 75 (IEAKERDQKKKQKRQENIAKAKRTKKD). Over residues 52–67 (KERDQKKKQKRQENIA) the composition is skewed to basic and acidic residues. The tract at residues 52-75 (KERDQKKKQKRQENIAKAKRTKKD) is disordered.

It belongs to the SMIM15 family.

The protein resides in the membrane. This chain is Small integral membrane protein 15 (smim15), found in Xenopus laevis (African clawed frog).